The sequence spans 501 residues: Lysine--tRNA ligase (501 aa).

Mg(2+) contacts are provided by Glu-402 and Glu-409.

The protein belongs to the class-II aminoacyl-tRNA synthetase family. As to quaternary structure, homodimer. The cofactor is Mg(2+).

It localises to the cytoplasm. The enzyme catalyses tRNA(Lys) + L-lysine + ATP = L-lysyl-tRNA(Lys) + AMP + diphosphate. The chain is Lysine--tRNA ligase from Helicobacter pylori (strain P12).